We begin with the raw amino-acid sequence, 323 residues long: ATP synthase gamma chain (323 aa).

Positions 206-240 are insert; that stretch reads NPIVNLVGFGYKERGVKPINNRRATSDIVGESKSI.

Belongs to the ATPase gamma chain family. As to quaternary structure, F-type ATPases have 2 components, CF(1) - the catalytic core - and CF(0) - the membrane proton channel. CF(1) has five subunits: alpha(3), beta(3), gamma(1), delta(1), epsilon(1). CF(0) has three main subunits: a, b and c.

Its subcellular location is the cell inner membrane. Produces ATP from ADP in the presence of a proton gradient across the membrane. The gamma chain is believed to be important in regulating ATPase activity and the flow of protons through the CF(0) complex. This chain is ATP synthase gamma chain, found in Rickettsia conorii (strain ATCC VR-613 / Malish 7).